The sequence spans 225 residues: NAD(P)H-quinone oxidoreductase subunit K, chloroplastic (225 aa).

Residues Cys-43, Cys-44, Cys-108, and Cys-139 each contribute to the [4Fe-4S] cluster site.

The protein belongs to the complex I 20 kDa subunit family. In terms of assembly, NDH is composed of at least 16 different subunits, 5 of which are encoded in the nucleus. Requires [4Fe-4S] cluster as cofactor.

It is found in the plastid. Its subcellular location is the chloroplast thylakoid membrane. It catalyses the reaction a plastoquinone + NADH + (n+1) H(+)(in) = a plastoquinol + NAD(+) + n H(+)(out). It carries out the reaction a plastoquinone + NADPH + (n+1) H(+)(in) = a plastoquinol + NADP(+) + n H(+)(out). NDH shuttles electrons from NAD(P)H:plastoquinone, via FMN and iron-sulfur (Fe-S) centers, to quinones in the photosynthetic chain and possibly in a chloroplast respiratory chain. The immediate electron acceptor for the enzyme in this species is believed to be plastoquinone. Couples the redox reaction to proton translocation, and thus conserves the redox energy in a proton gradient. The sequence is that of NAD(P)H-quinone oxidoreductase subunit K, chloroplastic from Lactuca sativa (Garden lettuce).